Consider the following 260-residue polypeptide: RNA replication protein (260 aa).

A RdRp catalytic domain is found at 40–147 (GICTESDYEA…SERLCIKKEH (108 aa)).

This sequence belongs to the potexviruses/carlaviruses RNA replication protein family.

The catalysed reaction is RNA(n) + a ribonucleoside 5'-triphosphate = RNA(n+1) + diphosphate. It catalyses the reaction ATP + H2O = ADP + phosphate + H(+). Functionally, RNA replication. The central part of this protein possibly functions as an ATP-binding helicase. The polypeptide is RNA replication protein (Chrysanthemum morifolium (Florist's daisy)).